The sequence spans 201 residues: Small ribosomal subunit protein uS4c (201 aa).

One can recognise an S4 RNA-binding domain in the interval 89–157 (MRLDNILFRL…VQNYIASSDP (69 aa)).

The protein belongs to the universal ribosomal protein uS4 family. As to quaternary structure, part of the 30S ribosomal subunit. Contacts protein S5. The interaction surface between S4 and S5 is involved in control of translational fidelity.

Its subcellular location is the plastid. It is found in the chloroplast. Functionally, one of the primary rRNA binding proteins, it binds directly to 16S rRNA where it nucleates assembly of the body of the 30S subunit. With S5 and S12 plays an important role in translational accuracy. The polypeptide is Small ribosomal subunit protein uS4c (rps4) (Hordeum vulgare (Barley)).